The sequence spans 492 residues: Asparagine--tRNA ligase, mitochondrial (492 aa).

The protein belongs to the class-II aminoacyl-tRNA synthetase family.

It localises to the mitochondrion matrix. The enzyme catalyses tRNA(Asn) + L-asparagine + ATP = L-asparaginyl-tRNA(Asn) + AMP + diphosphate + H(+). Catalyzes the attachment of asparagine to tRNA(Asn) in the mitochondrion. The chain is Asparagine--tRNA ligase, mitochondrial (SLM5) from Saccharomyces cerevisiae (strain ATCC 204508 / S288c) (Baker's yeast).